A 438-amino-acid polypeptide reads, in one-letter code: Coenzyme A disulfide reductase (438 aa).

8–33 (GAVAGGATCASQIRRLDKESEIIVFE) lines the FAD pocket. Substrate contacts are provided by Thr-15, Gln-19, Arg-22, Ser-39, and Asn-42. Cys-43 acts as the Nucleophile in catalysis. Residue Cys-43 is the Redox-active of the active site. Lys-71 contacts substrate. NADP(+) is bound at residue 151-166 (ALVVGAGYISLEVLEN). 267–277 (TNIPNIYALGD) provides a ligand contact to FAD. His-299 contributes to the substrate binding site. Residue Tyr-419 participates in FAD binding. Substrate is bound at residue Lys-427.

Belongs to the class-III pyridine nucleotide-disulfide oxidoreductase family. In terms of assembly, homodimer. It depends on FAD as a cofactor.

The catalysed reaction is NADP(+) + 2 CoA = CoA-disulfide + NADPH + H(+). Its function is as follows. Catalyzes specifically the NADPH-dependent reduction of coenzyme A disulfide. The polypeptide is Coenzyme A disulfide reductase (Staphylococcus epidermidis (strain ATCC 35984 / DSM 28319 / BCRC 17069 / CCUG 31568 / BM 3577 / RP62A)).